The primary structure comprises 506 residues: Lysine--tRNA ligase (506 aa).

The Mg(2+) site is built by Glu416 and Glu423.

Belongs to the class-II aminoacyl-tRNA synthetase family. Homodimer. Mg(2+) is required as a cofactor.

It localises to the cytoplasm. The enzyme catalyses tRNA(Lys) + L-lysine + ATP = L-lysyl-tRNA(Lys) + AMP + diphosphate. This is Lysine--tRNA ligase from Xylella fastidiosa (strain M12).